We begin with the raw amino-acid sequence, 646 residues long: Chaperone protein DnaK (646 aa).

A Phosphothreonine; by autocatalysis modification is found at T198. Residues 603 to 646 form a disordered region; it reads EQAQQAGGAEGFDPNAFQGGDAGQQKADDGVVDAEFTEVKDDKK. Low complexity predominate over residues 618 to 627; the sequence is AFQGGDAGQQ.

This sequence belongs to the heat shock protein 70 family.

In terms of biological role, acts as a chaperone. This Acinetobacter baumannii (strain AB307-0294) protein is Chaperone protein DnaK.